The chain runs to 238 residues: Purine nucleoside phosphorylase DeoD-type (238 aa).

Residue His4 coordinates a purine D-ribonucleoside. Residues Gly20, Arg24, Arg43, and 87 to 90 contribute to the phosphate site; that span reads RVGS. A purine D-ribonucleoside contacts are provided by residues 179 to 181 and 203 to 204; these read EME and SD. Residue Asp204 is the Proton donor of the active site.

This sequence belongs to the PNP/UDP phosphorylase family. As to quaternary structure, homohexamer; trimer of homodimers.

The enzyme catalyses a purine D-ribonucleoside + phosphate = a purine nucleobase + alpha-D-ribose 1-phosphate. It catalyses the reaction a purine 2'-deoxy-D-ribonucleoside + phosphate = a purine nucleobase + 2-deoxy-alpha-D-ribose 1-phosphate. Catalyzes the reversible phosphorolytic breakdown of the N-glycosidic bond in the beta-(deoxy)ribonucleoside molecules, with the formation of the corresponding free purine bases and pentose-1-phosphate. The protein is Purine nucleoside phosphorylase DeoD-type of Haemophilus influenzae (strain 86-028NP).